Here is a 962-residue protein sequence, read N- to C-terminus: MTTETLTQLEQHELFLRRHIGPGADQQQEMLNFVGAESLEDLTAQIVPGAILLNRDLAVGDSCGEAEGLAYIRKIADKNKVFKSYIGMGYHGTEVPSVIQRNVLENPGWYTAYTPYQPEIAQGRLEAILNFQQVSMDLTGLDLASSSLLDEATAAAEAMALSKRVSKAKKANIFFVADDVFPQTIDVIKTRAECFGFEVVVGPAEEAVNYELFGALFQYTNRVGQICDHTELFAKLHEKKALVSVAADIMSLVVLKSPGSMGADVVLGNSQRFGVPMGFGGPHAAFFVTRDEYKRSLPGRIIGVSQDTRGNRALRMAMQTREQHIRREKANSNICTAQVLLANMASFYAVFHGPQGLKVIAERIHRLTDIVAAALTAKGVELVNNTWFDTLSIKGLDVTAVQARALATGLNLRIDSDGVIGVSLSETTTRSDVAELFDVLLGEGHGQDAAALDAAIIANGSSSIPSELVRKDAILTHPTFNRYQSETEMMRYIKRLENKDLALNHSMISLGSCTMKLNAATEMAPITWPEFGNMHPFCPQDQAQGYAQLLEELSTWLVDITGYDAVSLQPNSGAQGEYAGLLAIKQYHESRGDAHRNICLIPQSAHGTNPASAQLAGMKIVVTACDKAGNIDMADLKAKAAEVADNLSCIMVTYPSTHGVYEETIGEICEVIHQHGGQVYLDGANMNAQVGLTSPGFIGADVSHLNLHKTFAIPHGGGGPGMGPIGVKKHLAPFLSGHSVVKHGLESDNNGAVSAAPFGSAGILPITWMYIKLLGKKGLRQSTQVALLNANYVMKKLSAHYPVLYTGRNDRVAHECIIDLRPLKEASGVTEMDIAKRLNDYGFHAPTMSFPVAGTLMIEPTESESKVELDRFIEAMVSIRGEIAKVEAGEWPVDNNPLHNAPHTLADIMDPAFDSRPYSREEAVFPTNAVKANKFWPTVNRIDDVYGDRNLMCSCAPVSDYE.

Position 709 is an N6-(pyridoxal phosphate)lysine (K709).

This sequence belongs to the GcvP family. As to quaternary structure, the glycine cleavage system is composed of four proteins: P, T, L and H. Requires pyridoxal 5'-phosphate as cofactor.

The enzyme catalyses N(6)-[(R)-lipoyl]-L-lysyl-[glycine-cleavage complex H protein] + glycine + H(+) = N(6)-[(R)-S(8)-aminomethyldihydrolipoyl]-L-lysyl-[glycine-cleavage complex H protein] + CO2. Functionally, the glycine cleavage system catalyzes the degradation of glycine. The P protein binds the alpha-amino group of glycine through its pyridoxal phosphate cofactor; CO(2) is released and the remaining methylamine moiety is then transferred to the lipoamide cofactor of the H protein. In Shewanella pealeana (strain ATCC 700345 / ANG-SQ1), this protein is Glycine dehydrogenase (decarboxylating).